The chain runs to 439 residues: Sex-determination protein fem-3 (439 aa).

The interval Arg-21–Glu-45 is disordered.

Component of a complex containing fem-1, fem-2 and fem-3. Interacts with fem-1 and fem-2 (via N-terminus). Part of a E3 ubiquitin-protein ligase complex, at least composed of cul-2, elc-1, tra-1, fem-1, fem-2 and fem-3; mediates the ubiquitination and subsequent proteasomal degradation of tra-1. Interacts with tra-1. Interacts with sel-10. Interacts with tra-2.

In terms of biological role, required for male development. In XO (male) animals, fem-3 directs male differentiation in all tissues. In XX (hermaphrodite) animals, it specifies the first 80 or so germ cells to be sperm. Negatively regulates male development when bound to tra-2. Together with fem-2 associates with the CBC(fem-1) E3 ubiquitin-protein ligase complex which mediates the ubiquitination and subsequent proteasomal degradation of tra-1. The protein is Sex-determination protein fem-3 of Caenorhabditis remanei (Caenorhabditis vulgaris).